The chain runs to 298 residues: Mimecan (298 aa).

The first 20 residues, 1-20, serve as a signal peptide directing secretion; that stretch reads MKTLQSTLLLLLFVPLIKPA. An N-linked (GlcNAc...) (keratan sulfate) asparagine glycan is attached at asparagine 88. LRR repeat units follow at residues 112–131, 132–155, 156–179, 180–199, 200–225, 226–246, and 247–277; these read DAVPPLPKESAYLYARFNKI, KKLTAKDFADIPNLRRLDFTGNLI, EDIEDGTFSKLSLLEELSLAENQL, LKLPVLPPKLTLFNAKYNKI, KSRGIKANAFKKLNNLTFLYLDHNAL, ESVPLNLPESLRVIHLQFNNI, and ASITDDTFCKANDTSYIRDRIEEIRLEGNPI. Asparagine 214 carries an N-linked (GlcNAc...) (keratan sulfate) asparagine glycan. Cysteine 255 and cysteine 288 are joined by a disulfide. Asparagine 258 is a glycosylation site (N-linked (GlcNAc...) (keratan sulfate) asparagine).

This sequence belongs to the small leucine-rich proteoglycan (SLRP) family. SLRP class III subfamily. Contains keratan sulfate.

Its subcellular location is the secreted. It localises to the extracellular space. It is found in the extracellular matrix. In terms of biological role, induces bone formation in conjunction with TGF-beta-1 or TGF-beta-2. The chain is Mimecan (OGN) from Pongo abelii (Sumatran orangutan).